The primary structure comprises 244 residues: MQIIPAIDLKDGKCVRLRQGKFSEVTVYYDNPEDAALRWQNEGAEVLHVVDLDGAKEGKIGNLPSIKKIREAFRGNIEVGGGIRRIEDIELLLSVGIDRVIVGTIAVQSPDFVKEVCKRFPKKIIVGIDAKDGLVAVKGWVEVTEIRAIELALKMQDYGIWGIIYTDISRDGMLTGPNIEATKALVESVKVPVIASGGVSSIEDIRKLAEIPQLWGVITGKAIYSGAIDLKEALRIIKGDGVKK.

Catalysis depends on Asp8, which acts as the Proton acceptor. The active-site Proton donor is the Asp129.

The protein belongs to the HisA/HisF family.

The protein localises to the cytoplasm. It catalyses the reaction 1-(5-phospho-beta-D-ribosyl)-5-[(5-phospho-beta-D-ribosylamino)methylideneamino]imidazole-4-carboxamide = 5-[(5-phospho-1-deoxy-D-ribulos-1-ylimino)methylamino]-1-(5-phospho-beta-D-ribosyl)imidazole-4-carboxamide. It functions in the pathway amino-acid biosynthesis; L-histidine biosynthesis; L-histidine from 5-phospho-alpha-D-ribose 1-diphosphate: step 4/9. The polypeptide is 1-(5-phosphoribosyl)-5-[(5-phosphoribosylamino)methylideneamino] imidazole-4-carboxamide isomerase (Thermodesulfovibrio yellowstonii (strain ATCC 51303 / DSM 11347 / YP87)).